Here is a 1068-residue protein sequence, read N- to C-terminus: Ubiquitin-protein ligase E3B (1068 aa).

M1 carries the post-translational modification N-acetylmethionine. Residues 29–58 (RERAAVVIQAHVRSFLCRSRLQRDIRREID) enclose the IQ domain. S419 carries the phosphoserine modification. The HECT domain maps to 702–1068 (SQHAMKGVIR…ISMNTGFELS (367 aa)). Residue C1036 is the Glycyl thioester intermediate of the active site.

In terms of tissue distribution, widely expressed.

It localises to the postsynaptic density. The catalysed reaction is S-ubiquitinyl-[E2 ubiquitin-conjugating enzyme]-L-cysteine + [acceptor protein]-L-lysine = [E2 ubiquitin-conjugating enzyme]-L-cysteine + N(6)-ubiquitinyl-[acceptor protein]-L-lysine.. Its pathway is protein modification; protein ubiquitination. Functionally, E3 ubiquitin-protein ligase which accepts ubiquitin from an E2 ubiquitin-conjugating enzyme in the form of a thioester and then directly transfers the ubiquitin to targeted substrates. Ubiquitinates BCKDK and targets it for degradation, thereby regulating various metabolic processes. Involved in the positive regulation of neurite branching in hippocampal neurons and the control of neuronal spine number and morphology, through the ubiquitination of PPP3CC. The protein is Ubiquitin-protein ligase E3B (UBE3B) of Homo sapiens (Human).